Consider the following 219-residue polypeptide: Orotate phosphoribosyltransferase (219 aa).

Residue Lys26 coordinates 5-phospho-alpha-D-ribose 1-diphosphate. 34–35 is a binding site for orotate; it reads FF. Residues 72–73, Arg98, Lys99, Lys102, His104, and 124–132 each bind 5-phospho-alpha-D-ribose 1-diphosphate; these read YK and DDVITAGTA. The orotate site is built by Thr128 and Arg156.

The protein belongs to the purine/pyrimidine phosphoribosyltransferase family. PyrE subfamily. Homodimer. Mg(2+) is required as a cofactor.

It catalyses the reaction orotidine 5'-phosphate + diphosphate = orotate + 5-phospho-alpha-D-ribose 1-diphosphate. The protein operates within pyrimidine metabolism; UMP biosynthesis via de novo pathway; UMP from orotate: step 1/2. Catalyzes the transfer of a ribosyl phosphate group from 5-phosphoribose 1-diphosphate to orotate, leading to the formation of orotidine monophosphate (OMP). This chain is Orotate phosphoribosyltransferase, found in Xanthomonas campestris pv. campestris (strain 8004).